Reading from the N-terminus, the 427-residue chain is Ectoine TRAP transporter large permease protein TeaC (427 aa).

The next 12 helical transmembrane spans lie at 13-35, 49-69, 79-99, 103-123, 147-167, 172-192, 216-236, 237-257, 273-293, 320-340, 356-376, and 400-420; these read LLLG…FMMF, MAGI…AADI, LINM…VSTA, TLFG…GSPL, IAFL…SGTS, FIAG…YCVI, LALW…GGIF, SPTE…FVVF, GLIT…SWII, ICVA…ILVL, VLVG…PPFG, and FIFM…IALF.

It belongs to the TRAP transporter large permease family. As to quaternary structure, the complex comprises the extracytoplasmic solute receptor protein TeaA, and the two transmembrane proteins TeaB and TeaC.

It localises to the cell inner membrane. In terms of biological role, part of the tripartite ATP-independent periplasmic (TRAP) transport system TeaABC involved in the uptake of ectoine and hydroxyectoine in response to osmotic upshock. Probably functions as a recovery system for synthesized ectoine that leaks out of the cell. The protein is Ectoine TRAP transporter large permease protein TeaC (teaC) of Halomonas elongata (strain ATCC 33173 / DSM 2581 / NBRC 15536 / NCIMB 2198 / 1H9).